The primary structure comprises 402 residues: Nicotinate phosphoribosyltransferase (402 aa).

At His224 the chain carries Phosphohistidine; by autocatalysis.

This sequence belongs to the NAPRTase family. Transiently phosphorylated on a His residue during the reaction cycle. Phosphorylation strongly increases the affinity for substrates and increases the rate of nicotinate D-ribonucleotide production. Dephosphorylation regenerates the low-affinity form of the enzyme, leading to product release.

The catalysed reaction is nicotinate + 5-phospho-alpha-D-ribose 1-diphosphate + ATP + H2O = nicotinate beta-D-ribonucleotide + ADP + phosphate + diphosphate. Its pathway is cofactor biosynthesis; NAD(+) biosynthesis; nicotinate D-ribonucleotide from nicotinate: step 1/1. Catalyzes the synthesis of beta-nicotinate D-ribonucleotide from nicotinate and 5-phospho-D-ribose 1-phosphate at the expense of ATP. This is Nicotinate phosphoribosyltransferase from Neisseria meningitidis serogroup B (strain ATCC BAA-335 / MC58).